A 438-amino-acid polypeptide reads, in one-letter code: Trigger factor (438 aa).

A PPIase FKBP-type domain is found at 160-245 (DDKVTIDFVG…VKKIQQAELP (86 aa)).

It belongs to the FKBP-type PPIase family. Tig subfamily.

It localises to the cytoplasm. The enzyme catalyses [protein]-peptidylproline (omega=180) = [protein]-peptidylproline (omega=0). In terms of biological role, involved in protein export. Acts as a chaperone by maintaining the newly synthesized protein in an open conformation. Functions as a peptidyl-prolyl cis-trans isomerase. In Francisella tularensis subsp. tularensis (strain FSC 198), this protein is Trigger factor.